The sequence spans 385 residues: Serpin-Z10 (385 aa).

Residues 333 to 357 (GTEAAAVSVGVVSCTSFRRNPDFVA) are RCL.

It belongs to the serpin family.

In terms of biological role, probable serine protease inhibitor. This is Serpin-Z10 from Arabidopsis thaliana (Mouse-ear cress).